The following is a 122-amino-acid chain: Large ribosomal subunit protein uL14c (122 aa).

This sequence belongs to the universal ribosomal protein uL14 family. As to quaternary structure, part of the 50S ribosomal subunit.

It localises to the plastid. The protein localises to the chloroplast. Binds to 23S rRNA. This Zygnema circumcarinatum (Green alga) protein is Large ribosomal subunit protein uL14c.